The sequence spans 262 residues: 5'-nucleotidase SurE (262 aa).

A divalent metal cation is bound by residues Asp-8, Asp-9, Ser-40, and Asn-92.

Belongs to the SurE nucleotidase family. A divalent metal cation serves as cofactor.

The protein resides in the cytoplasm. It carries out the reaction a ribonucleoside 5'-phosphate + H2O = a ribonucleoside + phosphate. Functionally, nucleotidase that shows phosphatase activity on nucleoside 5'-monophosphates. The chain is 5'-nucleotidase SurE from Xylella fastidiosa (strain 9a5c).